The chain runs to 131 residues: Small ribosomal subunit protein bS6 (131 aa).

A disordered region spans residues 94-131 (DAVTEESQLAKNADEKRARKATTRRPDSNDDNDNHSDD). Positions 117–131 (RRPDSNDDNDNHSDD) are enriched in basic and acidic residues.

This sequence belongs to the bacterial ribosomal protein bS6 family.

Functionally, binds together with bS18 to 16S ribosomal RNA. The protein is Small ribosomal subunit protein bS6 of Psychrobacter cryohalolentis (strain ATCC BAA-1226 / DSM 17306 / VKM B-2378 / K5).